The following is a 408-amino-acid chain: Arginine biosynthesis bifunctional protein ArgJ (408 aa).

6 residues coordinate substrate: Thr158, Lys184, Thr195, Glu281, Asn403, and Thr408. Catalysis depends on Thr195, which acts as the Nucleophile.

Belongs to the ArgJ family. Heterotetramer of two alpha and two beta chains.

The protein localises to the cytoplasm. The enzyme catalyses N(2)-acetyl-L-ornithine + L-glutamate = N-acetyl-L-glutamate + L-ornithine. The catalysed reaction is L-glutamate + acetyl-CoA = N-acetyl-L-glutamate + CoA + H(+). Its pathway is amino-acid biosynthesis; L-arginine biosynthesis; L-ornithine and N-acetyl-L-glutamate from L-glutamate and N(2)-acetyl-L-ornithine (cyclic): step 1/1. The protein operates within amino-acid biosynthesis; L-arginine biosynthesis; N(2)-acetyl-L-ornithine from L-glutamate: step 1/4. In terms of biological role, catalyzes two activities which are involved in the cyclic version of arginine biosynthesis: the synthesis of N-acetylglutamate from glutamate and acetyl-CoA as the acetyl donor, and of ornithine by transacetylation between N(2)-acetylornithine and glutamate. The polypeptide is Arginine biosynthesis bifunctional protein ArgJ (Bacillus thuringiensis subsp. konkukian (strain 97-27)).